A 156-amino-acid polypeptide reads, in one-letter code: RNA pyrophosphohydrolase (156 aa).

The region spanning 6 to 148 (NYRPNVAAIV…KKNIYVKVIK (143 aa)) is the Nudix hydrolase domain. The Nudix box motif lies at 43-64 (GGIDKGESVKNALFRELKEEIG).

This sequence belongs to the Nudix hydrolase family. RppH subfamily. A divalent metal cation serves as cofactor.

In terms of biological role, accelerates the degradation of transcripts by removing pyrophosphate from the 5'-end of triphosphorylated RNA, leading to a more labile monophosphorylated state that can stimulate subsequent ribonuclease cleavage. The chain is RNA pyrophosphohydrolase from Campylobacter jejuni subsp. jejuni serotype O:6 (strain 81116 / NCTC 11828).